Here is a 311-residue protein sequence, read N- to C-terminus: Aspartate carbamoyltransferase catalytic subunit (311 aa).

The carbamoyl phosphate site is built by Arg-55 and Thr-56. An L-aspartate-binding site is contributed by Lys-85. Positions 106, 135, and 138 each coordinate carbamoyl phosphate. The L-aspartate site is built by Arg-168 and Arg-230. Residues Leu-268 and Pro-269 each coordinate carbamoyl phosphate.

Belongs to the aspartate/ornithine carbamoyltransferase superfamily. ATCase family. As to quaternary structure, heterododecamer (2C3:3R2) of six catalytic PyrB chains organized as two trimers (C3), and six regulatory PyrI chains organized as three dimers (R2).

It catalyses the reaction carbamoyl phosphate + L-aspartate = N-carbamoyl-L-aspartate + phosphate + H(+). It participates in pyrimidine metabolism; UMP biosynthesis via de novo pathway; (S)-dihydroorotate from bicarbonate: step 2/3. Catalyzes the condensation of carbamoyl phosphate and aspartate to form carbamoyl aspartate and inorganic phosphate, the committed step in the de novo pyrimidine nucleotide biosynthesis pathway. The sequence is that of Aspartate carbamoyltransferase catalytic subunit from Pectobacterium carotovorum subsp. carotovorum (strain PC1).